The sequence spans 277 residues: Large ribosomal subunit protein uL2 (277 aa).

Residues 222 to 277 (GVAMNPIDHPHGGGEGRTSGGRHPVTPWGKPTKGKKTRTNKSTDKFILLSRHKRKK) are disordered.

It belongs to the universal ribosomal protein uL2 family. Part of the 50S ribosomal subunit. Forms a bridge to the 30S subunit in the 70S ribosome.

Its function is as follows. One of the primary rRNA binding proteins. Required for association of the 30S and 50S subunits to form the 70S ribosome, for tRNA binding and peptide bond formation. It has been suggested to have peptidyltransferase activity; this is somewhat controversial. Makes several contacts with the 16S rRNA in the 70S ribosome. This is Large ribosomal subunit protein uL2 from Bradyrhizobium sp. (strain ORS 278).